Consider the following 284-residue polypeptide: Cell wall mannoprotein 1 (284 aa).

A signal peptide spans 1–17; that stretch reads MRFSALLVTLGLTGALA. Positions 176–234 are enriched in low complexity; sequence SSTGTASSSAPATETATATETSTATGTVTETATSTPVIPTGTASGSASATPSTTATPTT. The interval 176-252 is disordered; it reads SSTGTASSSA…SSTGTATAST (77 aa).

It belongs to the cell wall mannoprotein 1 family. Galactomannoprotein, glycosylated.

It localises to the secreted. It is found in the cell wall. Its function is as follows. Constitutive protein of the cell wall. Antigen target of host humoral immune response. The chain is Cell wall mannoprotein 1 from Aspergillus fumigatus (Neosartorya fumigata).